Consider the following 608-residue polypeptide: uncharacterized protein (608 aa).

The helical transmembrane segment at 4 to 24 (LIFMALLMSLLFIGTVFGYGD) threads the bilayer.

It to M.jannaschii MJ1394 and A.fulgidus AF2028.

It is found in the membrane. This is an uncharacterized protein from Methanocaldococcus jannaschii (strain ATCC 43067 / DSM 2661 / JAL-1 / JCM 10045 / NBRC 100440) (Methanococcus jannaschii).